The sequence spans 269 residues: Small ribosomal subunit protein eS1 (269 aa).

2 disordered regions span residues 1–20 (MAVG…SKKK) and 249–269 (AASG…QESV).

This sequence belongs to the eukaryotic ribosomal protein eS1 family. In terms of assembly, component of the small ribosomal subunit. Mature ribosomes consist of a small (40S) and a large (60S) subunit. The 40S subunit contains about 33 different proteins and 1 molecule of RNA (18S). The 60S subunit contains about 49 different proteins and 3 molecules of RNA (28S, 5.8S and 5S).

The protein resides in the cytoplasm. The protein is Small ribosomal subunit protein eS1 of Anopheles darlingi (Mosquito).